The sequence spans 422 residues: MFLKVQKSDISGSISIPGSKSHTIRSLFLAGLAKGTSVIRNPLLSTDAVSGVNVCRAFGSTYDLNNESYVVNGMGACPQVPENVIDVGNSGTSLRLGLMTAALVDGYTVFTGDYQIRKRQIGPLVEAINNLGGKAFTTRGNESAPVVIKGRATGGYTKLDCVTSQYLSSILLNTPLLEKDTHVEITRLNEIPYVEITLWWLDKLGIKYSHNSMKEFFIPGGQQYRPFECTIPGDFSSATFFMVQAAISERELVLTNLDMSDPQGDKAVLDILADMGAEIKYDHNNIKIKGKSLKGREIDMNSIPDALPAMAVAACFAKGETRLVNVPQARLKETDRISVMCSELTKMGADISELPDGLVIRESKLHGAAVKGYDDHRIVMSLAIAGLNCSGETVIDTAEAMNVTYPGFVESVKSCGGKIELI.

Positions 20, 21, and 25 each coordinate 3-phosphoshikimate. Lys-20 serves as a coordination point for phosphoenolpyruvate. Phosphoenolpyruvate is bound by residues Gly-91 and Arg-119. 6 residues coordinate 3-phosphoshikimate: Thr-163, Ser-164, Gln-165, Asp-305, Gln-328, and Lys-332. Phosphoenolpyruvate is bound at residue Gln-165. The active-site Proton acceptor is Asp-305. Positions 336 and 377 each coordinate phosphoenolpyruvate.

The protein belongs to the EPSP synthase family. As to quaternary structure, monomer.

Its subcellular location is the cytoplasm. The catalysed reaction is 3-phosphoshikimate + phosphoenolpyruvate = 5-O-(1-carboxyvinyl)-3-phosphoshikimate + phosphate. It functions in the pathway metabolic intermediate biosynthesis; chorismate biosynthesis; chorismate from D-erythrose 4-phosphate and phosphoenolpyruvate: step 6/7. Catalyzes the transfer of the enolpyruvyl moiety of phosphoenolpyruvate (PEP) to the 5-hydroxyl of shikimate-3-phosphate (S3P) to produce enolpyruvyl shikimate-3-phosphate and inorganic phosphate. This Ruminiclostridium cellulolyticum (strain ATCC 35319 / DSM 5812 / JCM 6584 / H10) (Clostridium cellulolyticum) protein is 3-phosphoshikimate 1-carboxyvinyltransferase.